A 985-amino-acid polypeptide reads, in one-letter code: Ankyrin repeat domain-containing protein 24 (985 aa).

5 ANK repeats span residues 52–81, 85–114, 118–147, 151–180, and 184–213; these read EGKS…DVMS, AGYN…VVDI, SGWT…HMNP, SGAT…ATND, and QGRT…QLSI. 5 disordered regions span residues 243 to 293, 311 to 360, 386 to 412, 476 to 503, and 594 to 614; these read RSSP…DRDA, IRGL…LGRE, QDEE…SAEE, YTEA…TAYQ, and DNAE…NPGM. Residues 291–488 are a coiled coil; the sequence is RDAYEEIVRL…AMHSQQQQQE (198 aa). Basic and acidic residues-rich tracts occupy residues 311–326 and 349–360; these read IRGL…KEPL and EKQEEKESLGRE.

As to quaternary structure, homodimer. Interacts (via C-terminal domain) with TRIOBP (via C-terminal domain) isoform 4; recruits TRIOBP isoform 4 to stereocilia rootlets. In terms of tissue distribution, expressed in vestibular hair bundles.

It is found in the cell membrane. It localises to the cell projection. The protein resides in the stereocilium. In terms of biological role, component of the stereocilia rootlet in hair cells of inner ear. Bridges the apical plasma membrane with the lower rootlet and maintains normal distribution of TRIOBP, thereby reinforcing stereocilia insertion points and organizing rootlets for hearing with long-term resilience. This chain is Ankyrin repeat domain-containing protein 24 (Ankrd24), found in Mus musculus (Mouse).